An 851-amino-acid chain; its full sequence is Glycogen phosphorylase, liver form (851 aa).

Ala-2 carries the post-translational modification N-acetylalanine. Ser-15 carries the post-translational modification Phosphoserine; by PHK; in form phosphorylase a. AMP is bound by residues 43-45, Tyr-76, and Arg-310; that span reads DRN. At Lys-364 the chain carries N6-succinyllysine. Lys-470 carries the post-translational modification N6-acetyllysine. Phosphoserine is present on residues Ser-524, Ser-561, and Ser-639. Residue Lys-681 is modified to N6-(pyridoxal phosphate)lysine. An N6-acetyllysine modification is found at Lys-796.

Belongs to the glycogen phosphorylase family. In terms of assembly, homodimer; enzymatically active. Interacts with PPP1R3B; recruits the phosphatase PP1 which dephosphorylates and inactivates PYGL/glycogen phosphorylase. Requires pyridoxal 5'-phosphate as cofactor. In terms of processing, acetylation, which is up-regulated by glucose and insulin and down-regulated by glucagon, inhibits the glycogen phosphorylase activity by promoting PPP1R3B-mediated recruitment of phosphatase PP1 and Ser-15 dephosphorylation. Post-translationally, phosphorylation at Ser-15 converts inactive phosphorylase b into active phosphorylase a. Dephosphorylation of Ser-15 by phosphatase PP1 inactivates the enzyme.

The protein resides in the cytoplasm. It is found in the cytosol. It catalyses the reaction [(1-&gt;4)-alpha-D-glucosyl](n) + phosphate = [(1-&gt;4)-alpha-D-glucosyl](n-1) + alpha-D-glucose 1-phosphate. With respect to regulation, allosterically regulated through the non-covalent binding of metabolites, being activated by AMP and inhibited by ATP, ADP, and glucose-6-phosphate. The activity is also controlled by post-translational modifications including phosphorylation and acetylation. Its function is as follows. Allosteric enzyme that catalyzes the rate-limiting step in glycogen catabolism, the phosphorolytic cleavage of glycogen to produce glucose-1-phosphate, and plays a central role in maintaining cellular and organismal glucose homeostasis. The sequence is that of Glycogen phosphorylase, liver form from Ovis aries (Sheep).